Reading from the N-terminus, the 159-residue chain is Cytochrome c-type biogenesis protein CcmE (159 aa).

Topologically, residues 1–8 are cytoplasmic; the sequence is MNIRRKNR. The helical; Signal-anchor for type II membrane protein transmembrane segment at 9–29 threads the bilayer; sequence LWIACAVLAGLALTIGLVLYA. The Periplasmic segment spans residues 30-159; it reads LRSNIDLFYT…PASVYKDPAS (130 aa). Heme contacts are provided by histidine 130 and tyrosine 134. Basic and acidic residues predominate over residues 134–147; it reads YTPPEVEKAMEANH. Positions 134 to 159 are disordered; the sequence is YTPPEVEKAMEANHRRPASVYKDPAS.

This sequence belongs to the CcmE/CycJ family.

The protein localises to the cell inner membrane. Functionally, heme chaperone required for the biogenesis of c-type cytochromes. Transiently binds heme delivered by CcmC and transfers the heme to apo-cytochromes in a process facilitated by CcmF and CcmH. The sequence is that of Cytochrome c-type biogenesis protein CcmE from Escherichia coli (strain SMS-3-5 / SECEC).